Consider the following 629-residue polypeptide: Phosphomethylpyrimidine synthase (629 aa).

The disordered stretch occupies residues 1–21 (MSIKAKNAAHLRESAQVDSGS). Residues asparagine 233, methionine 262, tyrosine 291, histidine 327, 347 to 349 (SRG), 388 to 391 (DGLR), and glutamate 427 contribute to the substrate site. Histidine 431 lines the Zn(2+) pocket. Tyrosine 454 serves as a coordination point for substrate. A Zn(2+)-binding site is contributed by histidine 495. [4Fe-4S] cluster-binding residues include cysteine 575, cysteine 578, and cysteine 583.

The protein belongs to the ThiC family. As to quaternary structure, homodimer. [4Fe-4S] cluster serves as cofactor.

It carries out the reaction 5-amino-1-(5-phospho-beta-D-ribosyl)imidazole + S-adenosyl-L-methionine = 4-amino-2-methyl-5-(phosphooxymethyl)pyrimidine + CO + 5'-deoxyadenosine + formate + L-methionine + 3 H(+). The protein operates within cofactor biosynthesis; thiamine diphosphate biosynthesis. In terms of biological role, catalyzes the synthesis of the hydroxymethylpyrimidine phosphate (HMP-P) moiety of thiamine from aminoimidazole ribotide (AIR) in a radical S-adenosyl-L-methionine (SAM)-dependent reaction. This chain is Phosphomethylpyrimidine synthase, found in Pseudomonas syringae pv. syringae (strain B728a).